Reading from the N-terminus, the 334-residue chain is Aspartate carbamoyltransferase catalytic subunit (334 aa).

The carbamoyl phosphate site is built by Arg71 and Thr72. Lys99 is a binding site for L-aspartate. Residues Arg121, His151, and Gln154 each contribute to the carbamoyl phosphate site. Arg184 and Arg239 together coordinate L-aspartate. Carbamoyl phosphate-binding residues include Gly280 and Pro281.

It belongs to the aspartate/ornithine carbamoyltransferase superfamily. ATCase family. As to quaternary structure, heterododecamer (2C3:3R2) of six catalytic PyrB chains organized as two trimers (C3), and six regulatory PyrI chains organized as three dimers (R2).

The catalysed reaction is carbamoyl phosphate + L-aspartate = N-carbamoyl-L-aspartate + phosphate + H(+). It functions in the pathway pyrimidine metabolism; UMP biosynthesis via de novo pathway; (S)-dihydroorotate from bicarbonate: step 2/3. Functionally, catalyzes the condensation of carbamoyl phosphate and aspartate to form carbamoyl aspartate and inorganic phosphate, the committed step in the de novo pyrimidine nucleotide biosynthesis pathway. In Pseudomonas fluorescens (strain Pf0-1), this protein is Aspartate carbamoyltransferase catalytic subunit.